Consider the following 496-residue polypeptide: Tyrosine-protein kinase Srms (496 aa).

Residues 55–116 (PRARLFRALY…PVTYLAKATP (62 aa)) form the SH3 domain. Residues 124–216 (WYFSGISRAQ…LIQNPLLQPC (93 aa)) enclose the SH2 domain. A Protein kinase domain is found at 234–495 (FVLRRKLGEG…AINRRLHLGL (262 aa)). ATP-binding positions include 240 to 248 (LGEGFFGEV) and K262. Catalysis depends on D354, which acts as the Proton acceptor. At Y384 the chain carries Phosphotyrosine; by autocatalysis.

The protein belongs to the protein kinase superfamily. Tyr protein kinase family. SRC subfamily. Interacts (via the SH2 and SH3 domains) with DOK1. Interacts with KHDRBS1/SAM68 and VIM. As to expression, higher expression in liver, lung, thymus and skin than in brain, kidney, heart and spleen. In skin, highly expressed in keratinocytes. Abundant in lung, liver, spleen, kidney and testis and is also detected in the cerebrum.

It localises to the cytoplasm. The enzyme catalyses L-tyrosyl-[protein] + ATP = O-phospho-L-tyrosyl-[protein] + ADP + H(+). Functionally, non-receptor tyrosine-protein kinase which phosphorylates DOK1 on tyrosine residues. Also phosphorylates KHDRBS1/SAM68 and VIM on tyrosine residues. Phosphorylation of KHDRBS1 is EGF-dependent. Phosphorylates OTUB1, promoting deubiquitination of RPTOR. In Mus musculus (Mouse), this protein is Tyrosine-protein kinase Srms (Srms).